The sequence spans 196 residues: Purpurin (196 aa).

A signal peptide spans 1-21 (MKYAQYVFLASIFSAVEYSLA). Disulfide bonds link cysteine 24–cysteine 182, cysteine 90–cysteine 196, and cysteine 142–cysteine 151.

This sequence belongs to the calycin superfamily. Lipocalin family.

The protein resides in the secreted. The protein localises to the extracellular space. Its subcellular location is the extracellular matrix. It is found in the interphotoreceptor matrix. May be involved in the transport of retinol between the photoreceptors and the pigmented epithelium. This is Purpurin from Gallus gallus (Chicken).